A 229-amino-acid chain; its full sequence is Large ribosomal subunit protein uL1 (229 aa).

Belongs to the universal ribosomal protein uL1 family. In terms of assembly, part of the 50S ribosomal subunit.

In terms of biological role, binds directly to 23S rRNA. The L1 stalk is quite mobile in the ribosome, and is involved in E site tRNA release. Protein L1 is also a translational repressor protein, it controls the translation of the L11 operon by binding to its mRNA. The protein is Large ribosomal subunit protein uL1 of Clostridium botulinum (strain Loch Maree / Type A3).